The chain runs to 199 residues: Recombination protein RecR (199 aa).

A C4-type zinc finger spans residues 58–73 (CKKCFNFTSEDECEIC). Residues 81 to 175 (KLICVVAETK…KVTRIAYGLP (95 aa)) enclose the Toprim domain.

This sequence belongs to the RecR family.

In terms of biological role, may play a role in DNA repair. It seems to be involved in an RecBC-independent recombinational process of DNA repair. It may act with RecF and RecO. The polypeptide is Recombination protein RecR (Prochlorococcus marinus (strain MIT 9312)).